The chain runs to 2671 residues: MAADTQVSETLKRFAGKVTTASVKERREILSELGKCVAGKDLPEGAVKGLCKLFCLTLHRYRDAASRRALQAAIQQLAEAQPEATAKNLLHSLQSSGIGSKAGVPSKSSGSAALLALTWTCLLVRIVFPSRAKRQGDIWNKLVEVQCLLLLEVLGGSHKHAVDGAVKKLTKLWKENPGLVEQYLSAILSLEPNQNYAGMLGLLVQFCTSHKEMDVVSQHKSALLDFYMKNILMSKVKPPKYLLDSCAPLLRYLSHSEFKDLILPTIQKSLLRSPENVIETISSLLASVTLDLSQYAMDIVKGLAGHLKSNSPRLMDEAVLALRNLARQCSDSSAMESLTKHLFAILGGSEGKLTVVAQKMSVLSGIGSVSHHVVSGPSSQVLNGIVAELFIPFLQQEVHEGTLVHAVSVLALWCNRFTMEVPKKLTEWFKKAFSLKTSTSAVRHAYLQCMLASYRGDTLLQALDLLPLLIQTVEKAASQSTQVPTITEGVAAALLLLKLSVADSQAEAKLSSFWQLIVDEKKQVFTSEKFLVMASEDALCTVLHLTERLFLDHPHRLTGNKVQQYHRALVAVLLSRTWHVRRQAQQTVRKLLSSLGGFKLAHGLLEELKTVLSSHKVLPLEALVTDAGEVTEAGKAYVPPRVLQEALCVISGVPGLKGDVTDTEQLAQEMLIISHHPSLVAVQSGLWPALLARMKIDPEAFITRHLDQIIPRMTTQSPLNQSSMNAMGSLSVLSPDRVLPQLISTITASVQNPALRLVTREEFAIMQTPAGELYDKSIIQSAQQDSIKKANMKRENKAYSFKEQIIELELKEEIKKKKGIKEEVQLTSKQKEMLQAQLDREAQVRRRLQELDGELEAALGLLDIILAKNPSGLTQYIPVLVDSFLPLLKSPLAAPRIKNPFLSLAACVMPSRLKALGTLVSHVTLRLLKPECVLDKSWCQEELSVAVKRAVMLLHTHTITSRVGKGEPGAAPLSAPAFSLVFPFLKMVLTEMPHHSEEEEEWMAQILQILTVQAQLRASPNTPPGRVDENGPELLPRVAMLRLLTWVIGTGSPRLQVLASDTLTTLCASSSGDDGCAFAEQEEVDVLLCALQSPCASVRETVLRGLMELHMVLPAPDTDEKNGLNLLRRLWVVKFDKEEEIRKLAERLWSMMGLDLQPDLCSLLIDDVIYHEAAVRQAGAEALSQAVARYQRQAAEVMGRLMEIYQEKLYRPPPVLDALGRVISESPPDQWEARCGLALALNKLSQYLDSSQVKPLFQFFVPDALNDRHPDVRKCMLDAALATLNTHGKENVNSLLPVFEEFLKNAPNDASYDAVRQSVVVLMGSLAKHLDKSDPKVKPIVAKLIAALSTPSQQVQESVASCLPPLVPAIKEDAGGMIQRLMQQLLESDKYAERKGAAYGLAGLVKGLGILSLKQQEMMAALTDAIQDKKNFRRREGALFAFEMLCTMLGKLFEPYVVHVLPHLLLCFGDGNQYVREAADDCAKAVMSNLSAHGVKLVLPSLLAALEEESWRTKAGSVELLGAMAYCAPKQLSSCLPNIVPKLTEVLTDSHVKVQKAGQQALRQIGSVIRNPEILAIAPVLLDALTDPSRKTQKCLQTLLDTKFVHFIDAPSLALIMPIVQRAFQDRSTDTRKMAAQIIGNMYSLTDQKDLAPYLPSVTPGLKASLLDPVPEVRTVSAKALGAMVKGMGESCFEDLLPWLMETLTYEQSSVDRSGAAQGLAEVMAGLGVEKLEKLMPEIVATASKVDIAPHVRDGYIMMFNYLPITFGDKFTPYVGPIIPCILKALADENEFVRDTALRAGQRVISMYAETAIALLLPQLEQGLFDDLWRIRFSSVQLLGDLLFHISGVTGKMTTETASEDDNFGTAQSNKAIITALGVERRNRVLAGLYMGRSDTQLVVRQASLHVWKIVVSNTPRTLREILPTLFGLLLGFLASTCADKRTIAARTLGDLVRKLGEKILPEIIPILEEGLRSQKSDERQGVCIGLSEIMKSTSRDAVLYFSESLVPTARKALCDPLEEVREAAAKTFEQLHSTIGHQALEDILPFLLKQLDDEEVSEFALDGLKQVMAIKSRVVLPYLVPKLTTPPVNTRVLAFLSSVAGDALTRHLGVILPAVMLALKEKLGTPDEQLEMANCQAVILSVEDDTGHRIIIEDLLEATRSPEVGMRQAAAIILNIYCSRSKADYTSHLRSLVSGLIRLFNDSSPVVLEESWDALNAITKKLDAGNQLALIEELHKEIRLIGNESKGEHVPGFCLPKKGVTSILPVLREGVLTGSPEQKEEAAKALGLVIRLTSADALRPSVVSITGPLIRILGDRFSWNVKAALLETLSLLLAKVGIALKPFLPQLQTTFTKALQDSNRGVRLKAADALGKLISIHIKVDPLFTELLNGIRAMEDPGVRDTMLQALRFVIQGAGAKVDAVIRKNIVSLLLSMLGHDEDNTRISSAGCLGELCAFLTEEELSAVLQQCLLADVSGIDWMVRHGRSLALSVAVNVAPGRLCAGRYSSDVQEMILSSATADRIPIAVSGVRGMGFLMRHHIETGGGQLPAKLSSLFVKCLQNPSSDIRLVAEKMIWWANKDPLPPLDPQAIKPILKALLDNTKDKNTVVRAYSDQAIVNLLKMRQGEEVFQSLSKILDVASLEVLNEVNRRSLKKLASQADSTEQVDDTILT.

Position 2 is an N-acetylalanine (A2). 10 HEAT repeats span residues N140–G178, E257–S293, Q294–D331, I385–K423, L425–L459, L460–D503, N560–G597, K599–A636, D697–V732, and L733–A770. A Phosphoserine modification is found at S729. The residue at position 786 (S786) is a Phosphoserine. Positions Q804–D863 form a coiled coil. 36 HEAT repeats span residues V879–L925, S979–L1016, L1035–G1072, F1078–A1115, D1155–R1192, Y1210–S1250, S1251–K1289, E1290–K1332, P1335–E1372, A1374–I1410, L1413–K1451, P1455–A1492, H1493–K1530, S1534–N1571, E1573–D1609, P1611–Q1648, P1653–E1690, C1692–V1729, K1731–D1769, P1773–E1810, A1812–G1848, E1921–E1958, K1959–R1996, Y2001–H2038, Q2039–V2076, P2078–T2106, R2107–D2146, T2147–A2184, S2188–A2225, K2259–A2296, P2301–G2338, I2339–K2380, D2382–A2417, V2422–E2459, Q2546–P2583, and Q2588–G2625. The interval G2260–L2408 is RWDBD region. Phosphoserine is present on S2276. One copy of the HEAT 47; degenerate repeat lies at E2627 to S2661.

This sequence belongs to the GCN1 family. Interacts with EIF2AK4/GCN2; this interaction stimulates the EIF2AK4/GCN2 kinase activity and is impaired by IMPACT upon a variety of stress conditions, such as amino acid depletion, UV-C irradiation, proteasome inhibitor treatment and glucose deprivation. Interacts with IMPACT; this prevents the interaction of GCN1 with EIF2AK4/GCN2 and inhibits EIF2AK4/GCN2 kinase activity. Interacts with RNF14; interaction takes place following ribosome stalling and promotes recruitment of RNF14. As to expression, ubiquitously expressed. Expressed in skeletal muscules, ovary and testis.

Its subcellular location is the cytoplasm. Its function is as follows. Ribosome collision sensor that plays a key role in the RNF14-RNF25 translation quality control pathway, a pathway that takes place when a ribosome has stalled during translation, and which promotes ubiquitination and degradation of translation factors on stalled ribosomes. Directly binds to the ribosome and acts as a sentinel for colliding ribosomes: activated following ribosome stalling and promotes recruitment of RNF14, which directly ubiquitinates EEF1A1/eEF1A, leading to its degradation. In addition to EEF1A1/eEF1A, the RNF14-RNF25 translation quality control pathway mediates degradation of ETF1/eRF1 and ubiquitination of ribosomal protein. GCN1 also acts as a positive activator of the integrated stress response (ISR) by mediating activation of EIF2AK4/GCN2 in response to amino acid starvation. Interaction with EIF2AK4/GCN2 on translating ribosomes stimulates EIF2AK4/GCN2 kinase activity, leading to phosphorylation of eukaryotic translation initiation factor 2 (eIF-2-alpha/EIF2S1). EIF2S1/eIF-2-alpha phosphorylation converts EIF2S1/eIF-2-alpha into a global protein synthesis inhibitor, leading to a global attenuation of cap-dependent translation, and thus to a reduced overall utilization of amino acids, while concomitantly initiating the preferential translation of ISR-specific mRNAs, such as the transcriptional activator ATF4, and hence allowing ATF4-mediated reprogramming of amino acid biosynthetic gene expression to alleviate nutrient depletion. In Homo sapiens (Human), this protein is Stalled ribosome sensor GCN1.